Here is a 474-residue protein sequence, read N- to C-terminus: Coronin-1C (474 aa).

WD repeat units follow at residues G78–S118, G128–N168, M172–D202, A215–N249, and D263–H303. Residues V435 to A474 adopt a coiled-coil conformation. K446 carries the post-translational modification N6-acetyllysine.

The protein belongs to the WD repeat coronin family. As to quaternary structure, homotrimer. Binds F-actin. Interacts with RCC2. Interacts preferentially with nucleotide-free and GDP-bound RAC1. Interacts with VIM (via head domain). Interacts with MICAL2; this interaction recruits MICAL2 to the actin filaments. As to expression, detected in skeletal muscle (at protein level). Detected in fibroblasts (at protein level). Ubiquitous.

It localises to the cell membrane. The protein resides in the cell projection. Its subcellular location is the lamellipodium. The protein localises to the ruffle membrane. It is found in the cytoplasm. It localises to the cytoskeleton. The protein resides in the cell cortex. Its subcellular location is the endosome membrane. Its function is as follows. Plays a role in directed cell migration by regulating the activation and subcellular location of RAC1. Increases the presence of activated RAC1 at the leading edge of migrating cells. Required for normal organization of the cytoskeleton, including the actin cytoskeleton, microtubules and the vimentin intermediate filaments. Required for normal cell proliferation, cell migration, and normal formation of lamellipodia. Plays a role in endoplasmic reticulum-associated endosome fission: localizes to endosome membrane tubules and promotes recruitment of TMCC1, leading to recruitment of the endoplasmic reticulum to endosome tubules for fission. Endosome membrane fission of early and late endosomes is essential to separate regions destined for lysosomal degradation from carriers to be recycled to the plasma membrane. Required for normal distribution of mitochondria within cells. The protein is Coronin-1C (Coro1c) of Mus musculus (Mouse).